A 516-amino-acid chain; its full sequence is Propionyl-CoA carboxylase, carboxyltransferase subunit (516 aa).

Residues 1 to 32 (MTMEDRIDELREKREEALKGGGEDRIASQHDK) form a disordered region. A CoA carboxyltransferase N-terminal domain is found at 3–259 (MEDRIDELRE…NNVEDPPRVE (257 aa)). A CoA carboxyltransferase C-terminal domain is found at 263–509 (DPERVADELE…KSKRKSQPDK (247 aa)).

This sequence belongs to the AccD/PCCB family. The propionyl coenzyme A carboxylase (PCC) complex is composed of three subunits: PccA (biotin carboxylase and biotin-carboxyl carrier), PccB (carboxyltransferase) and PccX.

It catalyses the reaction propanoyl-CoA + hydrogencarbonate + ATP = (S)-methylmalonyl-CoA + ADP + phosphate + H(+). It functions in the pathway metabolic intermediate metabolism; propanoyl-CoA degradation; succinyl-CoA from propanoyl-CoA: step 1/3. In terms of biological role, part of the propionyl coenzyme A carboxylase (PCC) complex involved in propionate utilization and in the production of the poly(3-hydroxybutyrate-co-3-hydroxyvalerate)(PHBV), which is a water-insoluble biopolymer used as intracellular energy reserve material when cells grow under conditions of nutrient limitation. The complex catalyzes the carboxylation of propionyl-CoA to methylmalonyl-CoA. PCC is also able to catalyze the carboxylation of acetyl-CoA. The chain is Propionyl-CoA carboxylase, carboxyltransferase subunit from Haloferax mediterranei (strain ATCC 33500 / DSM 1411 / JCM 8866 / NBRC 14739 / NCIMB 2177 / R-4) (Halobacterium mediterranei).